The following is a 222-amino-acid chain: 2-C-methyl-D-erythritol 4-phosphate cytidylyltransferase (222 aa).

This sequence belongs to the IspD/TarI cytidylyltransferase family. IspD subfamily.

The enzyme catalyses 2-C-methyl-D-erythritol 4-phosphate + CTP + H(+) = 4-CDP-2-C-methyl-D-erythritol + diphosphate. It functions in the pathway isoprenoid biosynthesis; isopentenyl diphosphate biosynthesis via DXP pathway; isopentenyl diphosphate from 1-deoxy-D-xylulose 5-phosphate: step 2/6. Catalyzes the formation of 4-diphosphocytidyl-2-C-methyl-D-erythritol from CTP and 2-C-methyl-D-erythritol 4-phosphate (MEP). The protein is 2-C-methyl-D-erythritol 4-phosphate cytidylyltransferase of Porphyromonas gingivalis (strain ATCC 33277 / DSM 20709 / CIP 103683 / JCM 12257 / NCTC 11834 / 2561).